Reading from the N-terminus, the 287-residue chain is Large ribosomal subunit protein uL2 (287 aa).

The segment at 221–287 (RGSVMNPCDH…SKRSRGGRDS (67 aa)) is disordered. Residues 258-287 (KTRKKNKPSNKLVVRRRRRISKRSRGGRDS) are compositionally biased toward basic residues.

The protein belongs to the universal ribosomal protein uL2 family. As to quaternary structure, part of the 50S ribosomal subunit. Forms a bridge to the 30S subunit in the 70S ribosome.

One of the primary rRNA binding proteins. Required for association of the 30S and 50S subunits to form the 70S ribosome, for tRNA binding and peptide bond formation. It has been suggested to have peptidyltransferase activity; this is somewhat controversial. Makes several contacts with the 16S rRNA in the 70S ribosome. The protein is Large ribosomal subunit protein uL2 of Prochlorococcus marinus (strain MIT 9301).